We begin with the raw amino-acid sequence, 454 residues long: L-cysteine desulfhydrase (454 aa).

The segment at 1–25 (MEAGERRNGDSMSHNHRAPKKPRLA) is disordered. Residues 14 to 23 (HNHRAPKKPR) show a composition bias toward basic residues. An N6-(pyridoxal phosphate)lysine modification is found at Lys257.

The protein belongs to the class-V pyridoxal-phosphate-dependent aminotransferase family. It depends on pyridoxal 5'-phosphate as a cofactor. As to expression, highly expressed in stems and cauline leaves, and at lower levels in roots, rosette leaves and flowers.

It carries out the reaction L-cysteine + H2O = hydrogen sulfide + pyruvate + NH4(+) + H(+). Catalyzes the production of hydrogen sulfide (H2S) from cysteine. Is mainly responsible for the degradation of cysteine to generate H2S, a regulator of stomatal movement and closure. The protein is L-cysteine desulfhydrase (LCD) of Arabidopsis thaliana (Mouse-ear cress).